The sequence spans 570 residues: Zinc finger protein 76 (570 aa).

Residue lysine 24 forms a Glycyl lysine isopeptide (Lys-Gly) (interchain with G-Cter in SUMO2) linkage. Repeat copies occupy residues 34–45 (IQLEDGTTAYIH), 62–73 (VQLEDGSMAYIH), and 88–99 (VQLEDGSTAYIH). Residues 34–99 (IQLEDGTTAY…LEDGSTAYIH (66 aa)) are 3 X 12 AA approximate repeats. 7 consecutive C2H2-type zinc fingers follow at residues 165–189 (FRCG…ERAH), 195–219 (YRCD…VRTH), 225–249 (YKCP…VRTH), 255–279 (FQCP…VRTH), 285–309 (YTCP…VRIH), 315–339 (YVCT…HVVH), and 345–368 (YTCS…RSAH). A disordered region spans residues 365–401 (RSAHGELEATEESEQALYEQQQLEAASAAEESPPPKR). The span at 379 to 395 (QALYEQQQLEAASAAEE) shows a compositional bias: low complexity.

This sequence belongs to the krueppel C2H2-type zinc-finger protein family. As to expression, testis.

Its subcellular location is the nucleus. In terms of biological role, may be involved in transcriptional regulation. The sequence is that of Zinc finger protein 76 (ZNF76) from Homo sapiens (Human).